We begin with the raw amino-acid sequence, 813 residues long: MAEPRTASPRRLPALRRPGFLPPLLPPPPPPLLLLLLLLPLPAPSLGLGHSAELAFSVEPNDDIANPGQPIVLGCKVEGTPPVQVSWRKNGAELPEGTHTTLLANGSLLIHHFRLEQGGSPSDEGDYECVAQNRFGLLVSRKARLQAATMSDFHVHPQAVTGEEGGVARFQCQIHGLPKPLITWEKNRVPIDTDDERYTLLPKGVLQITGLRAEDSGIFHCVASNIASVRVSHGARLTVSGSGSGTYKEPTILVGPENLTLTVHQTAVLECVATGNPRPIVSWSRLDGRPIGVEGIQVLGTGNLIISDVTVQHSGVYVCAANRPGTRVRRTAQGRLVVQAPAEFVQHPQSISRPAGTTAMFTCQAQGEPPPHVTWLKNGQVLGAGGHVRLKNNNSTLSISGVGPEDEAIYQCVAENIAGSSQASARLTVLWAEGLPGPPRNVRAVSVSSTEVRVSWSEPLAHTKEIIGYVLHIRKAADSPKLEYQEAVSKSTFQHLVRDLEPSTAYSFYIKAYTPRGASLASVPTLASTLGEAPVPPPLSVRLLGSSSLQLLWKPWPRLAQHNGGFKLFYRPVSATSFTGPILLPGTVSSYNLSQLDPSTVYEVKLLAYNQHGDGNATVRFVSLKGASERTALTPPCDCRKEDVTNHTSTTGIVIGIHIGVTCIIFCVLFLLFGQRGRVLLCKDVENQLSPPQGPRSQRDPGILALNGLSRGEGGQLSRDEKPVDAKELEQLFPTAGSAAQPGSTPTDPAAPAPCEETQLSMVQLQGFNLVAGRTTEATSPCAGPGPVPAPQDIGPVPLSEGQTQPPAVAAPQ.

Residues 1–21 (MAEPRTASPRRLPALRRPGFL) are disordered. The signal sequence occupies residues 1-47 (MAEPRTASPRRLPALRRPGFLPPLLPPPPPPLLLLLLLLPLPAPSLG). Residues 9 to 19 (PRRLPALRRPG) are compositionally biased toward low complexity. 4 consecutive Ig-like C2-type domains span residues 49–151 (GHSA…ATMS), 151–232 (SDFH…VRVS), 250–333 (PTIL…RTAQ), and 341–428 (PAEF…ARLT). Intrachain disulfides connect Cys-75–Cys-129 and Cys-172–Cys-221. N-linked (GlcNAc...) asparagine glycosylation is present at Asn-105. Residue Asn-258 is glycosylated (N-linked (GlcNAc...) asparagine). Disulfide bonds link Cys-271–Cys-319 and Cys-363–Cys-412. Residues Asn-393 and Asn-394 are each glycosylated (N-linked (GlcNAc...) asparagine). 2 Fibronectin type-III domains span residues 438–532 (PPRN…TLGE) and 535–630 (VPPP…ASER). N-linked (GlcNAc...) asparagine glycosylation is found at Asn-592, Asn-616, and Asn-646. A helical membrane pass occupies residues 653 to 673 (IVIGIHIGVTCIIFCVLFLLF). Disordered stretches follow at residues 689–724 (LSPPQGPRSQRDPGILALNGLSRGEGGQLSRDEKPV) and 775–813 (TTEATSPCAGPGPVPAPQDIGPVPLSEGQTQPPAVAAPQ).

The protein belongs to the immunoglobulin superfamily. DCC family. Detected in cerebellum, kidney, heart, lung, skeletal muscle and spleen.

It localises to the membrane. This Mus musculus (Mouse) protein is Immunoglobulin superfamily DCC subclass member 3 (Igdcc3).